The primary structure comprises 150 residues: MASLDSPLLILLVLAVLGIVSHNMTITLAVLFLLVVRFTPLNHFFPWVEKYGLSFGILVLTIGVLAPIASGKIAASEVVQAFLNWKSLLAVIIGIAVSWLGGRGVSLMSNQPSVVAGLLVGTVIGVALLRGVPVGPLIAAGLLSLLIGKG.

Transmembrane regions (helical) follow at residues Leu-8–Leu-28, Tyr-51–Gly-71, Ala-81–Gly-101, and Val-114–Val-134.

The protein belongs to the UPF0756 family.

The protein localises to the cell membrane. The chain is UPF0756 membrane protein Dd703_1075 from Musicola paradisiaca (strain Ech703) (Dickeya paradisiaca).